A 309-amino-acid polypeptide reads, in one-letter code: tRNA pseudouridine synthase B (309 aa).

The active-site Nucleophile is the aspartate 51.

This sequence belongs to the pseudouridine synthase TruB family. Type 1 subfamily.

The catalysed reaction is uridine(55) in tRNA = pseudouridine(55) in tRNA. Its function is as follows. Responsible for synthesis of pseudouridine from uracil-55 in the psi GC loop of transfer RNAs. This Coxiella burnetii (strain RSA 493 / Nine Mile phase I) protein is tRNA pseudouridine synthase B.